The primary structure comprises 152 residues: Small ribosomal subunit protein uS19x (152 aa).

This sequence belongs to the universal ribosomal protein uS19 family.

The protein resides in the cytoplasm. The sequence is that of Small ribosomal subunit protein uS19x (RPS15D) from Arabidopsis thaliana (Mouse-ear cress).